The following is a 526-amino-acid chain: Cholesterol side-chain cleavage enzyme, mitochondrial (526 aa).

A mitochondrion-targeting transit peptide spans 1–36 (MLAKGLCLRSVLVKSCQPFLSPVWQGPGLATGNGAG). Cys-459 contributes to the heme binding site.

This sequence belongs to the cytochrome P450 family. In terms of assembly, interacts with FDX1/adrenodoxin. It depends on heme as a cofactor. In terms of tissue distribution, expressed in the kidney where it localizes to the distal convoluted tubule and the thick ascending limb of the loop of Henle (at protein level). In the ovary, highly expressed in interstitial cells (at protein level). Also expressed in adrenal gland and testis.

It is found in the mitochondrion inner membrane. The enzyme catalyses 6 reduced [adrenodoxin] + cholesterol + 3 O2 + 6 H(+) = 4-methylpentanal + pregnenolone + 6 oxidized [adrenodoxin] + 4 H2O. It catalyses the reaction 2 reduced [adrenodoxin] + cholesterol + O2 + 2 H(+) = (22R)-hydroxycholesterol + 2 oxidized [adrenodoxin] + H2O. The catalysed reaction is (22R)-hydroxycholesterol + 2 reduced [adrenodoxin] + O2 + 2 H(+) = (20R,22R)-20,22-dihydroxycholesterol + 2 oxidized [adrenodoxin] + H2O. It carries out the reaction (20R,22R)-20,22-dihydroxycholesterol + 2 reduced [adrenodoxin] + O2 + 2 H(+) = 4-methylpentanal + pregnenolone + 2 oxidized [adrenodoxin] + 2 H2O. It participates in lipid metabolism; C21-steroid hormone metabolism. It functions in the pathway steroid metabolism; cholesterol metabolism. Functionally, a cytochrome P450 monooxygenase that catalyzes the side-chain hydroxylation and cleavage of cholesterol to pregnenolone, the precursor of most steroid hormones. Catalyzes three sequential oxidation reactions of cholesterol, namely the hydroxylation at C22 followed with the hydroxylation at C20 to yield 20R,22R-hydroxycholesterol that is further cleaved between C20 and C22 to yield the C21-steroid pregnenolone and 4-methylpentanal. Mechanistically, uses molecular oxygen inserting one oxygen atom into a substrate and reducing the second into a water molecule. Two electrons are provided by NADPH via a two-protein mitochondrial transfer system comprising flavoprotein FDXR (adrenodoxin/ferredoxin reductase) and nonheme iron-sulfur protein FDX1 or FDX2 (adrenodoxin/ferredoxin). The polypeptide is Cholesterol side-chain cleavage enzyme, mitochondrial (Rattus norvegicus (Rat)).